The sequence spans 82 residues: Small ribosomal subunit protein bS20 (82 aa).

Residues 1 to 29 (MPNIKSAKKDLRRSRAAAVRNRAQRSALR) are disordered. The segment covering 16–29 (AAAVRNRAQRSALR) has biased composition (low complexity).

This sequence belongs to the bacterial ribosomal protein bS20 family.

In terms of biological role, binds directly to 16S ribosomal RNA. The protein is Small ribosomal subunit protein bS20 of Gemmatimonas aurantiaca (strain DSM 14586 / JCM 11422 / NBRC 100505 / T-27).